The primary structure comprises 571 residues: L-erythrulose 1-kinase (571 aa).

One can recognise a DhaK domain in the interval 7 to 331 (SPDDFADEAV…WTAPVETPAY (325 aa)). His217 serves as the catalytic Tele-hemiaminal-histidine intermediate. Residues 367–567 (RNIVAVLETF…FAMLMKALGE (201 aa)) enclose the DhaL domain. ATP contacts are provided by residues 396–402 (DGDHGQG), 442–443 (TS), Gly484, Arg539, and 552–554 (DPG).

The catalysed reaction is L-erythrulose + ATP = L-erythrulose 1-phosphate + ADP + H(+). It participates in carbohydrate metabolism; L-threitol degradation. In terms of biological role, kinase that has a preference for L-erythrulose, producing L-erythrulose-1P. Involved in the degradation pathway of L-threitol, that allows M.smegmatis to grow on this compound as the sole carbon source. Is also able to phosphorylate D-erythrulose and dihydroxyacetone in vitro. The chain is L-erythrulose 1-kinase from Mycolicibacterium smegmatis (strain ATCC 700084 / mc(2)155) (Mycobacterium smegmatis).